We begin with the raw amino-acid sequence, 647 residues long: Threonine--tRNA ligase (647 aa).

Positions Met1–Thr61 constitute a TGS domain. Residues Asp242–Pro540 are catalytic. Residues Cys336, His387, and His517 each coordinate Zn(2+).

It belongs to the class-II aminoacyl-tRNA synthetase family. As to quaternary structure, homodimer. Zn(2+) serves as cofactor.

The protein resides in the cytoplasm. It catalyses the reaction tRNA(Thr) + L-threonine + ATP = L-threonyl-tRNA(Thr) + AMP + diphosphate + H(+). In terms of biological role, catalyzes the attachment of threonine to tRNA(Thr) in a two-step reaction: L-threonine is first activated by ATP to form Thr-AMP and then transferred to the acceptor end of tRNA(Thr). Also edits incorrectly charged L-seryl-tRNA(Thr). This Streptococcus gordonii (strain Challis / ATCC 35105 / BCRC 15272 / CH1 / DL1 / V288) protein is Threonine--tRNA ligase.